The sequence spans 162 residues: NADH-quinone oxidoreductase subunit I (162 aa).

4Fe-4S ferredoxin-type domains lie at 53 to 83 and 93 to 122; these read LRRY…IDSA and TRYD…ETHI. [4Fe-4S] cluster is bound by residues Cys-63, Cys-66, Cys-69, Cys-73, Cys-102, Cys-105, Cys-108, and Cys-112.

It belongs to the complex I 23 kDa subunit family. As to quaternary structure, NDH-1 is composed of 14 different subunits. Subunits NuoA, H, J, K, L, M, N constitute the membrane sector of the complex. [4Fe-4S] cluster serves as cofactor.

It is found in the cell inner membrane. It carries out the reaction a quinone + NADH + 5 H(+)(in) = a quinol + NAD(+) + 4 H(+)(out). Functionally, NDH-1 shuttles electrons from NADH, via FMN and iron-sulfur (Fe-S) centers, to quinones in the respiratory chain. The immediate electron acceptor for the enzyme in this species is believed to be ubiquinone. Couples the redox reaction to proton translocation (for every two electrons transferred, four hydrogen ions are translocated across the cytoplasmic membrane), and thus conserves the redox energy in a proton gradient. In Xanthomonas oryzae pv. oryzae (strain MAFF 311018), this protein is NADH-quinone oxidoreductase subunit I.